The following is a 319-amino-acid chain: MNSRIIGTGSYYPSDVRTNADLSLMVDTSDEWITDRTGIKERRIIGEHETAATMGFEASKKALEAAGIDAKSLDMIVCATTSGRYSLPSTACEIQKALDVDGIPAFDVAAACAGYCYALSVADQYIKSGMAKRILVVGTDCLSRMISPEDRTMVILFGDAAGATIIEASEEPGILSTHIHAAGSYGDLLAIGNPTRGDESSIHENWGSMKGNEVFRVAVTKLSEIVEETLAANNMQKSDLDWLVPHQANFRIIKATAKKLDMSLDQVVITLERYGNTSAATVPTALDEAIRDGRIKRGQNLLLEAFGGGFAWASALVRY.

Active-site residues include C112 and H246. The ACP-binding stretch occupies residues 247-251 (QANFR). N276 is a catalytic residue.

The protein belongs to the thiolase-like superfamily. FabH family. In terms of assembly, homodimer.

It localises to the cytoplasm. The enzyme catalyses malonyl-[ACP] + acetyl-CoA + H(+) = 3-oxobutanoyl-[ACP] + CO2 + CoA. The protein operates within lipid metabolism; fatty acid biosynthesis. Functionally, catalyzes the condensation reaction of fatty acid synthesis by the addition to an acyl acceptor of two carbons from malonyl-ACP. Catalyzes the first condensation reaction which initiates fatty acid synthesis and may therefore play a role in governing the total rate of fatty acid production. Possesses both acetoacetyl-ACP synthase and acetyl transacylase activities. Its substrate specificity determines the biosynthesis of branched-chain and/or straight-chain of fatty acids. The sequence is that of Beta-ketoacyl-[acyl-carrier-protein] synthase III from Pseudoalteromonas atlantica (strain T6c / ATCC BAA-1087).